The following is a 563-amino-acid chain: Putative inactive polypeptide N-acetylgalactosaminyltransferase 12 (563 aa).

At 1–6 the chain is on the cytoplasmic side; sequence MEVFAS. The chain crosses the membrane as a helical; Signal-anchor for type II membrane protein span at residues 7-29; it reads VLNCCFKYIVLPVWIFIVLLLLH. Residues 30–563 lie on the Lumenal side of the membrane; the sequence is RDLSSWDGLM…SVMQSANILV (534 aa). A glycan (N-linked (GlcNAc...) asparagine) is linked at Asn50. Cysteines 97 and 334 form a disulfide. Residues 109 to 225 form a catalytic subdomain A region; it reads MKPASIIMIF…NGWLSPLLDT (117 aa). A catalytic subdomain B region spans residues 280–342; sequence PYEVAAVRTS…PCSRVGHLQP (63 aa). N-linked (GlcNAc...) asparagine glycans are attached at residues Asn389 and Asn428. The Ricin B-type lectin domain maps to 433 to 549; that stretch reads ASGHVKTLEF…ANGKQRWILD (117 aa). An intrachain disulfide couples Cys446 to Cys461. Residues Asn464 and Asn469 are each glycosylated (N-linked (GlcNAc...) asparagine). 2 disulfide bridges follow: Cys485–Cys499 and Cys523–Cys537. N-linked (GlcNAc...) asparagine glycosylation is present at Asn552.

Belongs to the glycosyltransferase 2 family. GalNAc-T subfamily.

It localises to the golgi apparatus membrane. Its function is as follows. Probable inactive glycosyltransferase. This chain is Putative inactive polypeptide N-acetylgalactosaminyltransferase 12 (pgant12), found in Drosophila melanogaster (Fruit fly).